A 59-amino-acid chain; its full sequence is Embryonic testis differentiation protein (59 aa).

The segment at 1–28 (MDEKNPEAVPRPPEQNTELVPPKKSKSK) is disordered.

As to expression, specifically expressed in testis.

This Mus musculus (Mouse) protein is Embryonic testis differentiation protein.